A 457-amino-acid polypeptide reads, in one-letter code: Casein kinase 1-like protein 11 (457 aa).

The 270-residue stretch at 15–284 (FKLGRKLGSG…LRRLFRDLFI (270 aa)) folds into the Protein kinase domain. ATP-binding positions include 21–29 (LGSGSFGEL) and Lys-44. Asp-134 functions as the Proton acceptor in the catalytic mechanism. Disordered stretches follow at residues 305-337 (GSSS…GQDL) and 352-442 (NVSS…EDAI). Pro residues predominate over residues 311–324 (RPTPRPALDPPGPP). Composition is skewed to polar residues over residues 383-403 (NGST…SAEP) and 409-429 (SRLF…QSYE).

The protein belongs to the protein kinase superfamily. CK1 Ser/Thr protein kinase family. Casein kinase I subfamily. As to quaternary structure, monomer. In terms of processing, autophosphorylated.

The protein resides in the cytoplasm. It is found in the nucleus. The enzyme catalyses L-seryl-[protein] + ATP = O-phospho-L-seryl-[protein] + ADP + H(+). It catalyses the reaction L-threonyl-[protein] + ATP = O-phospho-L-threonyl-[protein] + ADP + H(+). Its activity is regulated as follows. Partially inhibited by N-(2-aminoethyl)-5-chloroisoquinoline-8-sulfonamide (CKI-7). In terms of biological role, casein kinases are operationally defined by their preferential utilization of acidic proteins such as caseins as substrates. Can phosphorylate casein, phosvitin, myosin light chains and poly(Glu,Tyr) in vitro. The protein is Casein kinase 1-like protein 11 of Arabidopsis thaliana (Mouse-ear cress).